Consider the following 199-residue polypeptide: MTPKFLWLVALVALYIPPIQSLNCVYLDDSILENVKLLGSTMTGFPLRCLKDITDFKFPKEILPYIQHMKREINAVSYRISSLALTIFNLKGSIPPVTEEHWERIRSGLFKQVRQAQECFMDEEKENREHPHSEDFLTVYLELGKYFFRIKKFLINKKYSFCAWKIVTVEIRRCFIIFSKSRKLLKMISESPTFKQELK.

Positions 1 to 21 are cleaved as a signal peptide; the sequence is MTPKFLWLVALVALYIPPIQS. 2 disulfides stabilise this stretch: Cys24/Cys119 and Cys49/Cys162.

Belongs to the alpha/beta interferon family. In terms of tissue distribution, expressed at low levels in peritoneal macrophages.

It is found in the secreted. In terms of biological role, may play a role in the regulation of immune cell function. The chain is Interferon kappa (Ifnk) from Mus musculus (Mouse).